We begin with the raw amino-acid sequence, 142 residues long: Large ribosomal subunit protein uL13 (142 aa).

Belongs to the universal ribosomal protein uL13 family. Part of the 50S ribosomal subunit.

Its function is as follows. This protein is one of the early assembly proteins of the 50S ribosomal subunit, although it is not seen to bind rRNA by itself. It is important during the early stages of 50S assembly. The polypeptide is Large ribosomal subunit protein uL13 (Yersinia pseudotuberculosis serotype O:1b (strain IP 31758)).